Reading from the N-terminus, the 90-residue chain is Acylphosphatase (90 aa).

Residues Lys3–Tyr90 form the Acylphosphatase-like domain. Catalysis depends on residues Arg18 and Asn36.

The protein belongs to the acylphosphatase family.

The enzyme catalyses an acyl phosphate + H2O = a carboxylate + phosphate + H(+). This is Acylphosphatase (acyP) from Pasteurella multocida (strain Pm70).